The primary structure comprises 75 residues: Small ribosomal subunit protein bS18 (75 aa).

It belongs to the bacterial ribosomal protein bS18 family. In terms of assembly, part of the 30S ribosomal subunit. Forms a tight heterodimer with protein bS6.

In terms of biological role, binds as a heterodimer with protein bS6 to the central domain of the 16S rRNA, where it helps stabilize the platform of the 30S subunit. This chain is Small ribosomal subunit protein bS18, found in Colwellia psychrerythraea (strain 34H / ATCC BAA-681) (Vibrio psychroerythus).